Consider the following 156-residue polypeptide: Ribosomal RNA large subunit methyltransferase H (156 aa).

S-adenosyl-L-methionine-binding positions include L73, G104, and 123–128 (LSALTL).

Belongs to the RNA methyltransferase RlmH family. Homodimer.

It localises to the cytoplasm. It carries out the reaction pseudouridine(1915) in 23S rRNA + S-adenosyl-L-methionine = N(3)-methylpseudouridine(1915) in 23S rRNA + S-adenosyl-L-homocysteine + H(+). Functionally, specifically methylates the pseudouridine at position 1915 (m3Psi1915) in 23S rRNA. The protein is Ribosomal RNA large subunit methyltransferase H of Shewanella putrefaciens (strain CN-32 / ATCC BAA-453).